A 449-amino-acid polypeptide reads, in one-letter code: Procollagen C-endopeptidase enhancer 1 (449 aa).

The signal sequence occupies residues 1–25 (MLPAATASLLGPLLTACALLPFAQG). N-linked (GlcNAc...) asparagine glycosylation occurs at asparagine 29. Intrachain disulfides connect cysteine 37/cysteine 63, cysteine 90/cysteine 112, cysteine 159/cysteine 186, cysteine 213/cysteine 236, cysteine 318/cysteine 386, cysteine 322/cysteine 389, and cysteine 333/cysteine 437. CUB domains lie at 37–149 (CGGD…YSGR) and 159–273 (CGGR…YKTL). Serine 50 carries the phosphoserine modification. The segment at 271–321 (KTLPRGTAKEGQGPGPKRGTEPKVKLPPKSQPPEKTEESPSAPDAPTCPKQ) is disordered. The region spanning 318–437 (CPKQCRRTGT…ILTNLSKRKC (120 aa)) is the NTR domain. The N-linked (GlcNAc...) asparagine glycan is linked to asparagine 431.

In terms of assembly, interacts with EFEMP2. In terms of processing, C-terminally processed at multiple positions.

The protein resides in the secreted. Its function is as follows. Binds to the C-terminal propeptide of type I procollagen and enhances procollagen C-proteinase activity. C-terminal processed part of PCPE (CT-PCPE) may have an metalloproteinase inhibitory activity. This is Procollagen C-endopeptidase enhancer 1 (PCOLCE) from Homo sapiens (Human).